A 278-amino-acid chain; its full sequence is HTH-type transcriptional activator RhaS (278 aa).

The region spanning 174–272 (NQLMAWLEDH…NWSPRDIRQG (99 aa)) is the HTH araC/xylS-type domain. 2 consecutive DNA-binding regions (H-T-H motif) follow at residues 191–212 (EAVA…KQHT) and 239–262 (VTEI…RREF).

As to quaternary structure, binds DNA as a dimer.

The protein resides in the cytoplasm. Its function is as follows. Activates expression of the rhaBAD and rhaT operons. The sequence is that of HTH-type transcriptional activator RhaS from Salmonella agona (strain SL483).